A 212-amino-acid chain; its full sequence is Ras-related protein Rab-21 (212 aa).

GTP is bound by residues 14–21, 62–66, and 120–123; these read GEGCVGKT, DTAGQ, and NKCD. Residues 181 to 212 form a disordered region; the sequence is TNTTGQTTNRSERIPIVPDSDSGNKQPGCCSN. The span at 201 to 212 shows a compositional bias: polar residues; that stretch reads DSGNKQPGCCSN. S-geranylgeranyl cysteine attachment occurs at residues cysteine 209 and cysteine 210.

The protein belongs to the small GTPase superfamily. Rab family. Interacts with LIM domain proteins limF and ChLim.

The protein localises to the cell membrane. In terms of biological role, involved in the regulation of phagocytosis. This Dictyostelium discoideum (Social amoeba) protein is Ras-related protein Rab-21 (rab21).